A 779-amino-acid polypeptide reads, in one-letter code: Endonuclease MutS2 (779 aa).

328 to 335 (GPNTGGKT) contributes to the ATP binding site. A Smr domain is found at 704-779 (LDLRGKRYEE…GSGATIVTLG (76 aa)).

The protein belongs to the DNA mismatch repair MutS family. MutS2 subfamily. As to quaternary structure, homodimer. Binds to stalled ribosomes, contacting rRNA.

Its function is as follows. Endonuclease that is involved in the suppression of homologous recombination and thus may have a key role in the control of bacterial genetic diversity. In terms of biological role, acts as a ribosome collision sensor, splitting the ribosome into its 2 subunits. Detects stalled/collided 70S ribosomes which it binds and splits by an ATP-hydrolysis driven conformational change. Acts upstream of the ribosome quality control system (RQC), a ribosome-associated complex that mediates the extraction of incompletely synthesized nascent chains from stalled ribosomes and their subsequent degradation. Probably generates substrates for RQC. This Streptococcus agalactiae serotype Ia (strain ATCC 27591 / A909 / CDC SS700) protein is Endonuclease MutS2.